The following is a 129-amino-acid chain: N16.5 matrix protein (129 aa).

An N-terminal signal peptide occupies residues 1–23 (MTCTLRWTITALVLLGICHLARP). Repeat copies occupy residues 91-92 (NG), 93-94 (NG), 95-96 (NG), 97-98 (NG), and 99-100 (NG). A 5 X 2 AA tandem repeats of N-G region spans residues 91–100 (NGNGNGNGNG).

This sequence belongs to the N16 matrix protein family. Heterooligomer; disulfide-linked. Pif97, Pif80, N16 and other proteins form a complex. As to expression, component of conchiolin, the organic matrix of nacre. Specifically expressed in mantle epithelium.

It is found in the secreted. The protein localises to the extracellular space. It localises to the extracellular matrix. In terms of biological role, may be specifically involved in the formation of the nacreous layer. This chain is N16.5 matrix protein, found in Pinctada fucata (Akoya pearl oyster).